The following is a 197-amino-acid chain: Putative peptidyl-prolyl cis-trans isomerase (197 aa).

The PPIase cyclophilin-type domain maps to G14–V195.

This sequence belongs to the cyclophilin-type PPIase family.

It catalyses the reaction [protein]-peptidylproline (omega=180) = [protein]-peptidylproline (omega=0). Functionally, PPIases accelerate the folding of proteins. It catalyzes the cis-trans isomerization of proline imidic peptide bonds in oligopeptides. The polypeptide is Putative peptidyl-prolyl cis-trans isomerase (Staphylococcus aureus (strain bovine RF122 / ET3-1)).